The chain runs to 355 residues: Anthranilate phosphoribosyltransferase (355 aa).

Residues G102, 105–106 (GD), S110, 112–115 (NIST), 130–138 (KHGNRSVSS), and S142 each bind 5-phospho-alpha-D-ribose 1-diphosphate. G102 contributes to the anthranilate binding site. S114 contributes to the Mg(2+) binding site. An anthranilate-binding site is contributed by N133. R188 serves as a coordination point for anthranilate. Mg(2+)-binding residues include D246 and E247.

It belongs to the anthranilate phosphoribosyltransferase family. In terms of assembly, homodimer. Mg(2+) is required as a cofactor.

It carries out the reaction N-(5-phospho-beta-D-ribosyl)anthranilate + diphosphate = 5-phospho-alpha-D-ribose 1-diphosphate + anthranilate. Its pathway is amino-acid biosynthesis; L-tryptophan biosynthesis; L-tryptophan from chorismate: step 2/5. Catalyzes the transfer of the phosphoribosyl group of 5-phosphorylribose-1-pyrophosphate (PRPP) to anthranilate to yield N-(5'-phosphoribosyl)-anthranilate (PRA). The polypeptide is Anthranilate phosphoribosyltransferase (Pectobacterium carotovorum subsp. carotovorum (strain PC1)).